The chain runs to 177 residues: MEIRGTTILAVRHKGHVALAGDGQVTLGQSVVMKHTAKKVRRMYKNQVIAGFAGTTADAFTLFERFDNYLEETNGNLVRAAVELAKEWRKDKYLRRLEAMLLVVDKDHTFVLSGTGDVIEPDDGIAAIGSGGLYAVAAARALVAHSELSAAEIARESMRITAEICVFTNLNLTLETL.

Residue Thr-6 is part of the active site. Na(+) is bound by residues Ala-162, Cys-165, and Thr-168.

This sequence belongs to the peptidase T1B family. HslV subfamily. In terms of assembly, a double ring-shaped homohexamer of HslV is capped on each side by a ring-shaped HslU homohexamer. The assembly of the HslU/HslV complex is dependent on binding of ATP.

Its subcellular location is the cytoplasm. The catalysed reaction is ATP-dependent cleavage of peptide bonds with broad specificity.. Its activity is regulated as follows. Allosterically activated by HslU binding. Its function is as follows. Protease subunit of a proteasome-like degradation complex believed to be a general protein degrading machinery. In Lawsonia intracellularis (strain PHE/MN1-00), this protein is ATP-dependent protease subunit HslV.